A 102-amino-acid polypeptide reads, in one-letter code: Small ribosomal subunit protein uS10 (102 aa).

This sequence belongs to the universal ribosomal protein uS10 family. In terms of assembly, part of the 30S ribosomal subunit.

In terms of biological role, involved in the binding of tRNA to the ribosomes. In Agrobacterium fabrum (strain C58 / ATCC 33970) (Agrobacterium tumefaciens (strain C58)), this protein is Small ribosomal subunit protein uS10.